Reading from the N-terminus, the 816-residue chain is Larval serum protein 1 alpha chain (816 aa).

A signal peptide spans 1–16 (MKFAIAFLACVAVVTA).

Belongs to the hemocyanin family. Heterohexamer, composed of three subunits, alpha, beta and gamma. In terms of tissue distribution, larval hemolymph.

It localises to the secreted. The protein resides in the extracellular space. Its function is as follows. Larval storage protein (LSP) which may serve as a store of amino acids for synthesis of adult proteins. The protein is Larval serum protein 1 alpha chain (Lsp1alpha) of Drosophila melanogaster (Fruit fly).